A 358-amino-acid chain; its full sequence is DNA integrity scanning protein DisA (358 aa).

The DAC domain occupies 6–144 (RPTLREAVAR…RGERHVLTDS (139 aa)). Residues glycine 73, leucine 91, and 104–108 (TRHRS) each bind ATP.

The protein belongs to the DisA family. In terms of assembly, homooctamer. Mg(2+) serves as cofactor.

It catalyses the reaction 2 ATP = 3',3'-c-di-AMP + 2 diphosphate. Participates in a DNA-damage check-point. DisA forms globular foci that rapidly scan along the chromosomes searching for lesions. Functionally, also has diadenylate cyclase activity, catalyzing the condensation of 2 ATP molecules into cyclic di-AMP (c-di-AMP). c-di-AMP likely acts as a signaling molecule that may couple DNA integrity with a cellular process. The protein is DNA integrity scanning protein DisA of Mycobacterium bovis (strain ATCC BAA-935 / AF2122/97).